The following is a 582-amino-acid chain: MLLQRCPVLIRSPTAILGKMIKTHQFLIGIGRCPILATQGTTCSQIHLKATKAGGDSPSWAKSHCPFMLLELQDGKSKIVQKAAPEVQEDVKTFKTDLPISLASTSLRKPFFSPQEPEKNSEKVTHLIQNNMAGNHVFGYDQFFRNKIMEKKQDHTYRVFKTVNRWADAYPFAEHFFEASVASKDVSVWCSNDYLGMSRHPRVLQATQETLQRHGAGAGGTRNISGTSRFHVELEQELAELHQKDSALLFSSCFVANDSTLFTLAKILPGCEIYSDAGNHASMIQGIRNSGAAKFVFRHNDPDHLKKLLKKSNPETPKIVAFETVHSMDGAICPLEELCDVAHQYGALTFVDEVHAVGLYGSRGAGIGERDGIMHKIDIISGTLGKAFGCVGGYIASTRDLVDMVRSYAAGFIFTTSLPPMVLSGALESVRLLKGEEGQALRRAHQRNVKHMRQLLMDRGLPVIPCPSHIIPIRVGDAALNSRICDLLLSKHGIYVQAINYPTVPRGEELLRLAPSPHHSPQMMEDFVEKLLAAWTEVGLPLQDVSIAACNFCRRPVHFELMSEWERSYFGNMGPQYVTTYA.

The N-terminal 44 residues, 1 to 44, are a transit peptide targeting the mitochondrion; that stretch reads MLLQRCPVLIRSPTAILGKMIKTHQFLIGIGRCPILATQGTTCS. Position 158 (Arg158) interacts with succinyl-CoA. Pyridoxal 5'-phosphate-binding residues include Cys253 and Phe254. Succinyl-CoA is bound by residues Ser275 and Lys294. Pyridoxal 5'-phosphate is bound by residues Ser327, His355, and Thr383. Lys386 is a catalytic residue. Lys386 is subject to N6-(pyridoxal phosphate)lysine. Residues Thr415 and Thr416 each coordinate pyridoxal 5'-phosphate. Thr503 provides a ligand contact to succinyl-CoA.

This sequence belongs to the class-II pyridoxal-phosphate-dependent aminotransferase family. As to quaternary structure, homodimer. Pyridoxal 5'-phosphate serves as cofactor.

The protein resides in the mitochondrion inner membrane. It catalyses the reaction succinyl-CoA + glycine + H(+) = 5-aminolevulinate + CO2 + CoA. It participates in porphyrin-containing compound metabolism; protoporphyrin-IX biosynthesis; 5-aminolevulinate from glycine: step 1/1. In terms of biological role, catalyzes the pyridoxal 5'-phosphate (PLP)-dependent condensation of succinyl-CoA and glycine to form aminolevulinic acid (ALA), with CoA and CO2 as by-products. Contributes significantly to heme formation during erythropoiesis. The polypeptide is 5-aminolevulinate synthase, erythroid-specific, mitochondrial (ALAS2) (Delphinapterus leucas (Beluga whale)).